A 1175-amino-acid chain; its full sequence is DNA-directed RNA polymerase subunit beta (1175 aa).

The disordered stretch occupies residues 1–24 (MEGSLLVASSASNNETANNVESTD). The span at 7–23 (VASSASNNETANNVEST) shows a compositional bias: low complexity.

This sequence belongs to the RNA polymerase beta chain family. The RNAP catalytic core consists of 2 alpha, 1 beta, 1 beta' and 1 omega subunit. When a sigma factor is associated with the core the holoenzyme is formed, which can initiate transcription.

The enzyme catalyses RNA(n) + a ribonucleoside 5'-triphosphate = RNA(n+1) + diphosphate. DNA-dependent RNA polymerase catalyzes the transcription of DNA into RNA using the four ribonucleoside triphosphates as substrates. The sequence is that of DNA-directed RNA polymerase subunit beta from Renibacterium salmoninarum (strain ATCC 33209 / DSM 20767 / JCM 11484 / NBRC 15589 / NCIMB 2235).